A 937-amino-acid polypeptide reads, in one-letter code: Chromatin assembly factor 1 subunit A (937 aa).

A disordered region spans residues 21–69; the sequence is RLPFKRLNPVPKEKHDAEAEGKKGKCSKSGLGQSKDSSTDTLHASTDNM. Over residues 31–43 the composition is skewed to basic and acidic residues; the sequence is PKEKHDAEAEGKK. Polar residues predominate over residues 59 to 69; it reads TDTLHASTDNM. The PxVxL motif motif lies at 213 to 226; that stretch reads FEGKMPVVLLEDIM. Disordered regions lie at residues 250–386, 574–614, 753–778, 831–851, and 910–937; these read SHEG…EKRK, VDSD…IPHG, GDTSPVSPNTSRPQTPVGEDSGVPSK, SGKEDGGSVPGVAPVQSTPVS, and TVTETAPESRGTTAAHQDASMVSPSNTV. Positions 255–269 are enriched in low complexity; that stretch reads SVLTNSSLSSLSVSS. The span at 301–386 shows a compositional bias: basic and acidic residues; it reads SSAEKEKLRL…KLRVKEEKRK (86 aa). Acidic residues-rich tracts occupy residues 574-586 and 594-608; these read VDSDEEWEEEEPG and GDDEEEGEDEDDDDG. Residues 756–766 show a composition bias toward polar residues; it reads SPVSPNTSRPQ.

It belongs to the CHAF1A family. As to quaternary structure, subunit of the CAF-1 complex that contains RBBP4, CHAF1B and CHAF1A. Interacts with CHAF1B, PCNA and RBBP4.

The protein localises to the nucleus. Its function is as follows. Acts as a component of the histone chaperone complex chromatin assembly factor 1 (CAF-1), which assembles histone octamers onto DNA during replication and repair. CAF-1 performs the first step of the nucleosome assembly process, bringing newly synthesized histones H3 and H4 to replicating DNA; histones H2A/H2B can bind to this chromatin precursor subsequent to DNA replication to complete the histone octamer. The chain is Chromatin assembly factor 1 subunit A (CHAF1A) from Gallus gallus (Chicken).